The primary structure comprises 391 residues: Formate-dependent phosphoribosylglycinamide formyltransferase (391 aa).

Residues 20-21 (EL) and Glu80 each bind N(1)-(5-phospho-beta-D-ribosyl)glycinamide. ATP-binding positions include Arg112, Lys153, 158–163 (SSGKGQ), 193–196 (EGFV), and Glu201. The region spanning 117 to 306 (RLAAETLGLP…EFALHVRAIL (190 aa)) is the ATP-grasp domain. Positions 265 and 277 each coordinate Mg(2+). Residues Asp284, Lys354, and 361–362 (RR) contribute to the N(1)-(5-phospho-beta-D-ribosyl)glycinamide site.

It belongs to the PurK/PurT family. In terms of assembly, homodimer.

The enzyme catalyses N(1)-(5-phospho-beta-D-ribosyl)glycinamide + formate + ATP = N(2)-formyl-N(1)-(5-phospho-beta-D-ribosyl)glycinamide + ADP + phosphate + H(+). Its pathway is purine metabolism; IMP biosynthesis via de novo pathway; N(2)-formyl-N(1)-(5-phospho-D-ribosyl)glycinamide from N(1)-(5-phospho-D-ribosyl)glycinamide (formate route): step 1/1. In terms of biological role, involved in the de novo purine biosynthesis. Catalyzes the transfer of formate to 5-phospho-ribosyl-glycinamide (GAR), producing 5-phospho-ribosyl-N-formylglycinamide (FGAR). Formate is provided by PurU via hydrolysis of 10-formyl-tetrahydrofolate. This is Formate-dependent phosphoribosylglycinamide formyltransferase from Shewanella putrefaciens (strain CN-32 / ATCC BAA-453).